Here is a 574-residue protein sequence, read N- to C-terminus: Adenine deaminase (574 aa).

It belongs to the metallo-dependent hydrolases superfamily. Adenine deaminase family. Requires Mn(2+) as cofactor.

The enzyme catalyses adenine + H2O + H(+) = hypoxanthine + NH4(+). The protein is Adenine deaminase of Thermosipho melanesiensis (strain DSM 12029 / CIP 104789 / BI429).